The following is a 377-amino-acid chain: Nitric oxide reductase FlRd-NAD(+) reductase (377 aa).

This sequence belongs to the FAD-dependent oxidoreductase family. The cofactor is FAD.

The protein resides in the cytoplasm. It carries out the reaction 2 reduced [nitric oxide reductase rubredoxin domain] + NAD(+) + H(+) = 2 oxidized [nitric oxide reductase rubredoxin domain] + NADH. It functions in the pathway nitrogen metabolism; nitric oxide reduction. Its function is as follows. One of at least two accessory proteins for anaerobic nitric oxide (NO) reductase. Reduces the rubredoxin moiety of NO reductase. The chain is Nitric oxide reductase FlRd-NAD(+) reductase from Shigella dysenteriae serotype 1 (strain Sd197).